A 320-amino-acid chain; its full sequence is Cytochrome f (320 aa).

The N-terminal stretch at 1–35 (MENRNTFSWVKEQMTRSISVSIMIYVITRTSISNA) is a signal peptide. The heme site is built by Y36, C56, C59, and H60. The chain crosses the membrane as a helical span at residues 286–306 (VQGLLFFFASVILAQVFLVLK).

It belongs to the cytochrome f family. As to quaternary structure, the 4 large subunits of the cytochrome b6-f complex are cytochrome b6, subunit IV (17 kDa polypeptide, petD), cytochrome f and the Rieske protein, while the 4 small subunits are PetG, PetL, PetM and PetN. The complex functions as a dimer. It depends on heme as a cofactor.

Its subcellular location is the plastid. It is found in the chloroplast thylakoid membrane. Its function is as follows. Component of the cytochrome b6-f complex, which mediates electron transfer between photosystem II (PSII) and photosystem I (PSI), cyclic electron flow around PSI, and state transitions. The protein is Cytochrome f of Oryza nivara (Indian wild rice).